A 225-amino-acid chain; its full sequence is Cytidylate kinase (225 aa).

Residue 12–20 coordinates ATP; that stretch reads GPSGAGKGT.

It belongs to the cytidylate kinase family. Type 1 subfamily.

Its subcellular location is the cytoplasm. The enzyme catalyses CMP + ATP = CDP + ADP. It catalyses the reaction dCMP + ATP = dCDP + ADP. This chain is Cytidylate kinase, found in Stenotrophomonas maltophilia (strain K279a).